Here is a 44-residue protein sequence, read N- to C-terminus: Photosystem I reaction center subunit IX 2 (44 aa).

The chain crosses the membrane as a helical span at residues 13-35 (APVLATLWLSSTAVILIGVNSYF).

It belongs to the PsaJ family.

The protein localises to the cellular thylakoid membrane. In terms of biological role, may help in the organization of the PsaE and PsaF subunits. The polypeptide is Photosystem I reaction center subunit IX 2 (psaJ2) (Prochlorococcus marinus (strain NATL2A)).